The primary structure comprises 184 residues: ATP synthase subunit b, chloroplastic (184 aa).

Residues 27–49 (LATNPINLSVVFGVLIFFGKGVL) form a helical membrane-spanning segment.

It belongs to the ATPase B chain family. F-type ATPases have 2 components, F(1) - the catalytic core - and F(0) - the membrane proton channel. F(1) has five subunits: alpha(3), beta(3), gamma(1), delta(1), epsilon(1). F(0) has four main subunits: a(1), b(1), b'(1) and c(10-14). The alpha and beta chains form an alternating ring which encloses part of the gamma chain. F(1) is attached to F(0) by a central stalk formed by the gamma and epsilon chains, while a peripheral stalk is formed by the delta, b and b' chains.

The protein localises to the plastid. It localises to the chloroplast thylakoid membrane. Functionally, f(1)F(0) ATP synthase produces ATP from ADP in the presence of a proton or sodium gradient. F-type ATPases consist of two structural domains, F(1) containing the extramembraneous catalytic core and F(0) containing the membrane proton channel, linked together by a central stalk and a peripheral stalk. During catalysis, ATP synthesis in the catalytic domain of F(1) is coupled via a rotary mechanism of the central stalk subunits to proton translocation. Component of the F(0) channel, it forms part of the peripheral stalk, linking F(1) to F(0). In Arabis hirsuta (Hairy rock-cress), this protein is ATP synthase subunit b, chloroplastic.